A 370-amino-acid polypeptide reads, in one-letter code: tRNA 2-selenouridine synthase (370 aa).

The Rhodanese domain occupies 12–136; sequence FLEDVPMMDT…MRNFLLDTTR (125 aa). Cys-95 acts as the S-selanylcysteine intermediate in catalysis.

This sequence belongs to the SelU family. In terms of assembly, monomer.

The enzyme catalyses 5-methylaminomethyl-2-thiouridine(34) in tRNA + selenophosphate + (2E)-geranyl diphosphate + H2O + H(+) = 5-methylaminomethyl-2-selenouridine(34) in tRNA + (2E)-thiogeraniol + phosphate + diphosphate. It carries out the reaction 5-methylaminomethyl-2-thiouridine(34) in tRNA + (2E)-geranyl diphosphate = 5-methylaminomethyl-S-(2E)-geranyl-thiouridine(34) in tRNA + diphosphate. It catalyses the reaction 5-methylaminomethyl-S-(2E)-geranyl-thiouridine(34) in tRNA + selenophosphate + H(+) = 5-methylaminomethyl-2-(Se-phospho)selenouridine(34) in tRNA + (2E)-thiogeraniol. The catalysed reaction is 5-methylaminomethyl-2-(Se-phospho)selenouridine(34) in tRNA + H2O = 5-methylaminomethyl-2-selenouridine(34) in tRNA + phosphate. Its function is as follows. Involved in the post-transcriptional modification of the uridine at the wobble position (U34) of tRNA(Lys), tRNA(Glu) and tRNA(Gln). Catalyzes the conversion of 2-thiouridine (S2U-RNA) to 2-selenouridine (Se2U-RNA). Acts in a two-step process involving geranylation of 2-thiouridine (S2U) to S-geranyl-2-thiouridine (geS2U) and subsequent selenation of the latter derivative to 2-selenouridine (Se2U) in the tRNA chain. The sequence is that of tRNA 2-selenouridine synthase from Azotobacter vinelandii (strain DJ / ATCC BAA-1303).